The following is a 369-amino-acid chain: Protein-glutamate methylesterase/protein-glutamine glutaminase of group 3 operon (369 aa).

The Response regulatory domain occupies 11–128 (RVLIVDDSAA…DLERQEASIR (118 aa)). Position 62 is a 4-aspartylphosphate (D62). Positions 136-168 (ATETTRRRSQPEPRPLAPGPKLTADEILPARPP) are disordered. In terms of domain architecture, CheB-type methylesterase spans 170-358 (PVPETMPVVC…LDRLAARIME (189 aa)). Active-site residues include S183, H209, and D305.

Belongs to the CheB family. In terms of processing, phosphorylated in vitro by CheA2, but not by CheA1. Phosphorylation of the N-terminal regulatory domain activates the methylesterase activity.

It is found in the cytoplasm. The enzyme catalyses [protein]-L-glutamate 5-O-methyl ester + H2O = L-glutamyl-[protein] + methanol + H(+). It carries out the reaction L-glutaminyl-[protein] + H2O = L-glutamyl-[protein] + NH4(+). In terms of biological role, involved in chemotaxis. Part of a chemotaxis signal transduction system that modulates chemotaxis in response to various stimuli. Catalyzes the demethylation of specific methylglutamate residues introduced into the chemoreceptors (methyl-accepting chemotaxis proteins or MCP) by CheR. Also mediates the irreversible deamidation of specific glutamine residues to glutamic acid. This chain is Protein-glutamate methylesterase/protein-glutamine glutaminase of group 3 operon (cheB3), found in Cereibacter sphaeroides (Rhodobacter sphaeroides).